A 439-amino-acid chain; its full sequence is tRNA-2-methylthio-N(6)-dimethylallyladenosine synthase (439 aa).

The MTTase N-terminal domain maps to 2–119 (KYIYIKTWGC…LAQMIDKVEK (118 aa)). [4Fe-4S] cluster contacts are provided by C11, C48, C82, C156, C160, and C163. The 233-residue stretch at 142-374 (KKTGYTASIS…QNCINKQTMS (233 aa)) folds into the Radical SAM core domain. Residues 377–439 (RKMLKSTQSV…HTHSLQGELI (63 aa)) form the TRAM domain.

It belongs to the methylthiotransferase family. MiaB subfamily. In terms of assembly, monomer. [4Fe-4S] cluster is required as a cofactor.

The protein resides in the cytoplasm. The enzyme catalyses N(6)-dimethylallyladenosine(37) in tRNA + (sulfur carrier)-SH + AH2 + 2 S-adenosyl-L-methionine = 2-methylsulfanyl-N(6)-dimethylallyladenosine(37) in tRNA + (sulfur carrier)-H + 5'-deoxyadenosine + L-methionine + A + S-adenosyl-L-homocysteine + 2 H(+). Catalyzes the methylthiolation of N6-(dimethylallyl)adenosine (i(6)A), leading to the formation of 2-methylthio-N6-(dimethylallyl)adenosine (ms(2)i(6)A) at position 37 in tRNAs that read codons beginning with uridine. The sequence is that of tRNA-2-methylthio-N(6)-dimethylallyladenosine synthase from Buchnera aphidicola subsp. Schizaphis graminum (strain Sg).